Reading from the N-terminus, the 311-residue chain is Malate dehydrogenase (311 aa).

NAD(+) is bound by residues 7-13 (GAAGGIG) and D34. The substrate site is built by R81 and R87. Residues N94 and 117–119 (ITN) contribute to the NAD(+) site. 2 residues coordinate substrate: N119 and R153. Residue H177 is the Proton acceptor of the active site. An NAD(+)-binding site is contributed by M227.

The protein belongs to the LDH/MDH superfamily. MDH type 1 family. As to quaternary structure, homodimer.

The catalysed reaction is (S)-malate + NAD(+) = oxaloacetate + NADH + H(+). Catalyzes the reversible oxidation of malate to oxaloacetate. This is Malate dehydrogenase from Pseudoalteromonas atlantica (strain T6c / ATCC BAA-1087).